Here is a 604-residue protein sequence, read N- to C-terminus: Sulfite reductase [NADPH] flavoprotein alpha-component (604 aa).

Residues 66–204 (VTVLSASQTG…SANAWTDNIA (139 aa)) form the Flavodoxin-like domain. FMN-binding positions include 72 to 77 (SQTGNA), 119 to 122 (STQG), and 155 to 164 (LGDSSYPNFC). One can recognise an FAD-binding FR-type domain in the interval 239–453 (AAPFPAALLA…VERNDGFRLP (215 aa)). Residues Thr327, Gln361, 391–394 (RLYS), 409–411 (TVG), and 424–427 (GGAS) each bind FAD. Residues 524 to 525 (SR), 530 to 534 (KIYVQ), and Asp566 contribute to the NADP(+) site. Tyr604 contributes to the FAD binding site.

This sequence belongs to the NADPH-dependent sulphite reductase flavoprotein subunit CysJ family. It in the N-terminal section; belongs to the flavodoxin family. In the C-terminal section; belongs to the flavoprotein pyridine nucleotide cytochrome reductase family. Alpha(8)-beta(8). The alpha component is a flavoprotein, the beta component is a hemoprotein. FAD serves as cofactor. It depends on FMN as a cofactor.

It carries out the reaction hydrogen sulfide + 3 NADP(+) + 3 H2O = sulfite + 3 NADPH + 4 H(+). Its pathway is sulfur metabolism; hydrogen sulfide biosynthesis; hydrogen sulfide from sulfite (NADPH route): step 1/1. Functionally, component of the sulfite reductase complex that catalyzes the 6-electron reduction of sulfite to sulfide. This is one of several activities required for the biosynthesis of L-cysteine from sulfate. The flavoprotein component catalyzes the electron flow from NADPH -&gt; FAD -&gt; FMN to the hemoprotein component. In Neisseria meningitidis serogroup B (strain ATCC BAA-335 / MC58), this protein is Sulfite reductase [NADPH] flavoprotein alpha-component.